The sequence spans 171 residues: NADH-quinone oxidoreductase subunit I 2 (171 aa).

4Fe-4S ferredoxin-type domains lie at 39-71 (IVLT…LSKA) and 81-110 (EHFR…LTPD). Residues cysteine 51, cysteine 54, cysteine 57, cysteine 61, cysteine 90, cysteine 93, cysteine 96, and cysteine 100 each coordinate [4Fe-4S] cluster.

This sequence belongs to the complex I 23 kDa subunit family. As to quaternary structure, NDH-1 is composed of 14 different subunits. Subunits NuoA, H, J, K, L, M, N constitute the membrane sector of the complex. Requires [4Fe-4S] cluster as cofactor.

It is found in the cell inner membrane. It catalyses the reaction a quinone + NADH + 5 H(+)(in) = a quinol + NAD(+) + 4 H(+)(out). In terms of biological role, NDH-1 shuttles electrons from NADH, via FMN and iron-sulfur (Fe-S) centers, to quinones in the respiratory chain. The immediate electron acceptor for the enzyme in this species is believed to be ubiquinone. Couples the redox reaction to proton translocation (for every two electrons transferred, four hydrogen ions are translocated across the cytoplasmic membrane), and thus conserves the redox energy in a proton gradient. In Rhodopseudomonas palustris (strain BisB18), this protein is NADH-quinone oxidoreductase subunit I 2.